The chain runs to 1359 residues: Tripeptidyl-peptidase 2 (1359 aa).

The segment at Ala45–Ala81 is disordered. Residues Ala64–Ala81 show a composition bias toward low complexity. A Peptidase S8 domain is found at Glu102–Phe600. Residues Asp126, His353, and Ser539 each act as charge relay system in the active site.

It belongs to the peptidase S8 family.

It carries out the reaction Release of an N-terminal tripeptide from a polypeptide.. Serine protease that may function in the proteasome pathway. The chain is Tripeptidyl-peptidase 2 (TPP2) from Oryza sativa subsp. japonica (Rice).